Reading from the N-terminus, the 218-residue chain is DNA-directed RNA polymerase III subunit RPC7-like (218 aa).

Positions 130–218 (TIILPKRPPK…SDDNMDEAIY (89 aa)) are disordered. Residues 139-160 (KTTEDKEETIQKLETLEKKEEE) show a composition bias toward basic and acidic residues. 2 stretches are compositionally biased toward acidic residues: residues 161–193 (VTSE…EETD) and 201–218 (NGED…EAIY).

The protein belongs to the eukaryotic RPC7 RNA polymerase subunit family. As to quaternary structure, component of the RNA polymerase III (Pol III) complex consisting of 17 subunits. Pol III exists as two alternative complexes defined by the mutually exclusive incorporation of subunit POLR3G/RPC7alpha or POLR3GL/RPC7beta. Found in a trimeric complex with POLR3C/RPC3 and POLR3F/RPC6. Directly interacts with POLR3C.

Its subcellular location is the nucleus. In terms of biological role, DNA-dependent RNA polymerase catalyzes the transcription of DNA into RNA using the four ribonucleoside triphosphates as substrates. Specific peripheric component of RNA polymerase III which synthesizes small RNAs, such as 5S rRNA and tRNAs. The chain is DNA-directed RNA polymerase III subunit RPC7-like (POLR3GL) from Bos taurus (Bovine).